The chain runs to 351 residues: Anthranilate phosphoribosyltransferase (351 aa).

5-phospho-alpha-D-ribose 1-diphosphate contacts are provided by residues Gly84, 87 to 88, 95 to 98, 113 to 121, and Ala125; these read GD, NISS, and KHGNRGASS. Gly84 is a binding site for anthranilate. Residue Ser97 participates in Mg(2+) binding. An anthranilate-binding site is contributed by Asn116. Residue Arg171 coordinates anthranilate. Asp229 and Lys230 together coordinate Mg(2+).

Belongs to the anthranilate phosphoribosyltransferase family. Homodimer. Mg(2+) serves as cofactor.

The enzyme catalyses N-(5-phospho-beta-D-ribosyl)anthranilate + diphosphate = 5-phospho-alpha-D-ribose 1-diphosphate + anthranilate. Its pathway is amino-acid biosynthesis; L-tryptophan biosynthesis; L-tryptophan from chorismate: step 2/5. Its function is as follows. Catalyzes the transfer of the phosphoribosyl group of 5-phosphorylribose-1-pyrophosphate (PRPP) to anthranilate to yield N-(5'-phosphoribosyl)-anthranilate (PRA). The chain is Anthranilate phosphoribosyltransferase from Clavibacter sepedonicus (Clavibacter michiganensis subsp. sepedonicus).